The following is a 241-amino-acid chain: Interleukin-6 (241 aa).

The segment at 1 to 25 is disordered; the sequence is MNFTEGCEATGRRPGSAGSRRRRAP. A signal peptide spans 1–46; the sequence is MNFTEGCEATGRRPGSAGSRRRRAPRPGPVALLPLLLPLLLPPAAA. Cysteines 122 and 132 form a disulfide.

This sequence belongs to the IL-6 superfamily. As to quaternary structure, component of a hexamer of two molecules each of IL6, IL6R and IL6ST; first binds to IL6R to associate with the signaling subunit IL6ST.

The protein localises to the secreted. Its function is as follows. Cytokine with a wide variety of biological functions in immunity, tissue regeneration, and metabolism. Binds to IL6R, then the complex associates to the signaling subunit IL6ST/gp130 to trigger the intracellular IL6-signaling pathway. The interaction with the membrane-bound IL6R and IL6ST stimulates 'classic signaling', whereas the binding of IL6 and soluble IL6R to IL6ST stimulates 'trans-signaling'. Alternatively, 'cluster signaling' occurs when membrane-bound IL6:IL6R complexes on transmitter cells activate IL6ST receptors on neighboring receiver cells. In Gallus gallus (Chicken), this protein is Interleukin-6 (IL6).